Consider the following 61-residue polypeptide: Small ribosomal subunit protein uS14 (61 aa).

Residues cysteine 24, cysteine 27, cysteine 40, and cysteine 43 each contribute to the Zn(2+) site.

The protein belongs to the universal ribosomal protein uS14 family. Zinc-binding uS14 subfamily. In terms of assembly, part of the 30S ribosomal subunit. Contacts proteins S3 and S10. Zn(2+) serves as cofactor.

Its function is as follows. Binds 16S rRNA, required for the assembly of 30S particles and may also be responsible for determining the conformation of the 16S rRNA at the A site. The polypeptide is Small ribosomal subunit protein uS14 (Moorella thermoacetica (strain ATCC 39073 / JCM 9320)).